The primary structure comprises 198 residues: Glycerol-3-phosphate acyltransferase 2 (198 aa).

A run of 4 helical transmembrane segments spans residues 4 to 24 (TYLL…LVVG), 71 to 91 (LPII…AVLG), 113 to 133 (LLCY…SLLF), and 147 to 167 (VVAV…AMCL).

Belongs to the PlsY family. In terms of assembly, probably interacts with PlsX.

Its subcellular location is the cell membrane. It catalyses the reaction an acyl phosphate + sn-glycerol 3-phosphate = a 1-acyl-sn-glycero-3-phosphate + phosphate. It participates in lipid metabolism; phospholipid metabolism. Its function is as follows. Catalyzes the transfer of an acyl group from acyl-phosphate (acyl-PO(4)) to glycerol-3-phosphate (G3P) to form lysophosphatidic acid (LPA). This enzyme utilizes acyl-phosphate as fatty acyl donor, but not acyl-CoA or acyl-ACP. This is Glycerol-3-phosphate acyltransferase 2 from Bacillus cereus (strain ATCC 10987 / NRS 248).